Reading from the N-terminus, the 417-residue chain is uncharacterized protein (417 aa).

The protein to M.tuberculosis Rv2067c.

This is an uncharacterized protein from Synechococcus sp. (strain ATCC 27144 / PCC 6301 / SAUG 1402/1) (Anacystis nidulans).